The following is a 115-amino-acid chain: MFNLIQHIEHEQMKNLPAFRPGDSVEVKVWVVEGSKKRLQSFEGMIIAIRNRGLHSAFTVRKISNGEGVERVFQMHSPIIESITVKRCGFVRKAKLYYLRKRTGKAARIKERISS.

This sequence belongs to the bacterial ribosomal protein bL19 family.

Functionally, this protein is located at the 30S-50S ribosomal subunit interface and may play a role in the structure and function of the aminoacyl-tRNA binding site. This Baumannia cicadellinicola subsp. Homalodisca coagulata protein is Large ribosomal subunit protein bL19.